The primary structure comprises 287 residues: Eukaryotic translation initiation factor 3 subunit G (287 aa).

Disordered stretches follow at residues 1 to 34 (MSKL…KDGT) and 159 to 184 (TAGG…YVPP). An RRM domain is found at 207–285 (ATLRVTNVSE…LILRVEFAKR (79 aa)).

Belongs to the eIF-3 subunit G family. As to quaternary structure, component of the eukaryotic translation initiation factor 3 (eIF-3) complex.

The protein resides in the cytoplasm. Functionally, RNA-binding component of the eukaryotic translation initiation factor 3 (eIF-3) complex, which is involved in protein synthesis of a specialized repertoire of mRNAs and, together with other initiation factors, stimulates binding of mRNA and methionyl-tRNAi to the 40S ribosome. The eIF-3 complex specifically targets and initiates translation of a subset of mRNAs involved in cell proliferation. This subunit can bind 18S rRNA. The polypeptide is Eukaryotic translation initiation factor 3 subunit G (tif35) (Aspergillus oryzae (strain ATCC 42149 / RIB 40) (Yellow koji mold)).